The sequence spans 426 residues: Serine hydroxymethyltransferase (426 aa).

(6S)-5,6,7,8-tetrahydrofolate-binding positions include leucine 121 and 125–127; that span reads GHL. Lysine 230 carries the post-translational modification N6-(pyridoxal phosphate)lysine. 354 to 356 serves as a coordination point for (6S)-5,6,7,8-tetrahydrofolate; it reads SPF.

Belongs to the SHMT family. Homodimer. Pyridoxal 5'-phosphate serves as cofactor.

It is found in the cytoplasm. It carries out the reaction (6R)-5,10-methylene-5,6,7,8-tetrahydrofolate + glycine + H2O = (6S)-5,6,7,8-tetrahydrofolate + L-serine. Its pathway is one-carbon metabolism; tetrahydrofolate interconversion. It participates in amino-acid biosynthesis; glycine biosynthesis; glycine from L-serine: step 1/1. Functionally, catalyzes the reversible interconversion of serine and glycine with tetrahydrofolate (THF) serving as the one-carbon carrier. This reaction serves as the major source of one-carbon groups required for the biosynthesis of purines, thymidylate, methionine, and other important biomolecules. Also exhibits THF-independent aldolase activity toward beta-hydroxyamino acids, producing glycine and aldehydes, via a retro-aldol mechanism. In Gloeobacter violaceus (strain ATCC 29082 / PCC 7421), this protein is Serine hydroxymethyltransferase.